The chain runs to 35 residues: GFGTILKALAKIAGKVVKKLATKPGATYMLKQNLQ.

A Glutamine amide modification is found at Gln35.

In terms of tissue distribution, expressed by the venom gland.

Its subcellular location is the secreted. The protein is Cupiennin-2d of Cupiennius salei (American wandering spider).